Consider the following 549-residue polypeptide: Arginine--tRNA ligase (549 aa).

Positions 122–132 (ANPTGFLHLGH) match the 'HIGH' region motif.

It belongs to the class-I aminoacyl-tRNA synthetase family. Monomer.

It localises to the cytoplasm. It carries out the reaction tRNA(Arg) + L-arginine + ATP = L-arginyl-tRNA(Arg) + AMP + diphosphate. The polypeptide is Arginine--tRNA ligase (Mycoplasmoides gallisepticum (strain R(low / passage 15 / clone 2)) (Mycoplasma gallisepticum)).